Here is a 296-residue protein sequence, read N- to C-terminus: Nucleotide-binding protein SUB0630 (296 aa).

ATP is bound at residue Gly13–Thr20. GTP is bound at residue Asp63–Ser66.

This sequence belongs to the RapZ-like family.

Functionally, displays ATPase and GTPase activities. This is Nucleotide-binding protein SUB0630 from Streptococcus uberis (strain ATCC BAA-854 / 0140J).